We begin with the raw amino-acid sequence, 517 residues long: Maturase K (517 aa).

The protein belongs to the intron maturase 2 family. MatK subfamily.

The protein localises to the plastid. It localises to the chloroplast. Functionally, usually encoded in the trnK tRNA gene intron. Probably assists in splicing its own and other chloroplast group II introns. This is Maturase K from Palhinhaea cernua (Nodding clubmoss).